Here is a 179-residue protein sequence, read N- to C-terminus: O-acetyl-ADP-ribose deacetylase (179 aa).

In terms of domain architecture, Macro spans 1 to 175 (MTSRLQVIQG…LYARLLTQQG (175 aa)). Residues 11–12 (DI), Asn25, 33–35 (GVD), and 122–126 (STGVY) each bind substrate. Residue Asp35 is the Proton acceptor of the active site.

It belongs to the MacroD-type family. YmdB subfamily. Homodimer. Interacts with RNase III.

It carries out the reaction 3''-O-acetyl-ADP-D-ribose + H2O = ADP-D-ribose + acetate + H(+). The catalysed reaction is 2''-O-acetyl-ADP-D-ribose + H2O = ADP-D-ribose + acetate + H(+). Its function is as follows. Deacetylates O-acetyl-ADP ribose to yield ADP-ribose and free acetate. Down-regulates ribonuclease 3 (RNase III) activity. Acts by interacting directly with the region of the ribonuclease that is required for dimerization/activation. This chain is O-acetyl-ADP-ribose deacetylase, found in Salmonella newport (strain SL254).